Reading from the N-terminus, the 157-residue chain is Eukaryotic translation initiation factor 5A-1 (157 aa).

At serine 2 the chain carries N-acetylserine. Serine 2 is subject to Phosphoserine. Residues threonine 7 and threonine 10 each carry the phosphothreonine modification. At lysine 51 the chain carries Hypusine. The residue at position 74 (serine 74) is a Phosphoserine. A Glycyl lysine isopeptide (Lys-Gly) (interchain with G-Cter in ubiquitin) cross-link involves residue lysine 86.

The protein belongs to the eIF-5A family. In terms of assembly, homodimer. Binds to 80S ribosomes. Actively translating ribosomes show mutually exclusive binding of eIF5a (HYP2 or ANB1) and EFT1/eEF2. Interacts with DYS1 and LIA1. Lys-51 undergoes hypusination, a unique post-translational modification that consists in the addition of a butylamino group from spermidine to lysine side chain, leading to the formation of the unusual amino acid hypusine. eIF-5As are the only known proteins to undergo this modification, which is essential for their function.

It is found in the cytoplasm. Its function is as follows. Translation factor that promotes translation elongation and termination, particularly upon ribosome stalling at specific amino acid sequence contexts. Binds between the exit (E) and peptidyl (P) site of the ribosome and promotes rescue of stalled ribosome: specifically required for efficient translation of polyproline-containing peptides as well as other motifs that stall the ribosome. Acts as a ribosome quality control (RQC) cofactor by joining the RQC complex to facilitate peptidyl transfer during CAT tailing step. Involved in actin dynamics and cell cycle progression, mRNA decay and probably in a pathway involved in stress response and maintenance of cell wall integrity. This is Eukaryotic translation initiation factor 5A-1 (HYP2) from Saccharomyces cerevisiae (strain ATCC 204508 / S288c) (Baker's yeast).